The primary structure comprises 191 residues: Signal peptidase IB (191 aa).

Over 1–7 the chain is Cytoplasmic; the sequence is MKKELLE. The helical transmembrane segment at 8–28 threads the bilayer; the sequence is WIISIAVAFVILFIVGKFIVT. The Extracellular segment spans residues 29-191; the sequence is PYTIKGESMD…YNFNPENTKN (163 aa). Catalysis depends on residues Ser36 and Lys77.

This sequence belongs to the peptidase S26 family.

Its subcellular location is the cell membrane. It carries out the reaction Cleavage of hydrophobic, N-terminal signal or leader sequences from secreted and periplasmic proteins.. Functionally, essential for cell viability. In Staphylococcus aureus (strain MRSA252), this protein is Signal peptidase IB (spsB).